A 283-amino-acid chain; its full sequence is Orotidine 5'-phosphate decarboxylase (283 aa).

Catalysis depends on K97, which acts as the Proton donor.

This sequence belongs to the OMP decarboxylase family. Type 2 subfamily.

The enzyme catalyses orotidine 5'-phosphate + H(+) = UMP + CO2. The protein operates within pyrimidine metabolism; UMP biosynthesis via de novo pathway; UMP from orotate: step 2/2. This Clostridium botulinum (strain Loch Maree / Type A3) protein is Orotidine 5'-phosphate decarboxylase.